Consider the following 339-residue polypeptide: GATA transcription factor 5 (339 aa).

Disordered stretches follow at residues 68-88 (MVRV…RSSD), 126-145 (EYSG…WLTG), 163-206 (PVPA…PSSP), and 221-242 (ERPP…SGEL). Positions 126–136 (EYSGPNLTGTP) are enriched in polar residues. The short motif at 167–174 (KARSKRNR) is the Nuclear localization signal element. Positions 181–206 (SLGSSSSSGPSSSGSTSSSSSGPSSP) are enriched in low complexity. The segment at 245-299 (LQPQRKCSHCGVQKTPQWRAGPMGAKTLCNACGVRYKSGRLLPEYRPACSPTFSS) adopts a GATA-type zinc-finger fold. Residues 314–339 (RKKEPTSDNETGLNQLVQSPQAVPSF) are disordered. Over residues 321–339 (DNETGLNQLVQSPQAVPSF) the composition is skewed to polar residues.

The protein belongs to the type IV zinc-finger family. Class A subfamily.

Its subcellular location is the nucleus. Functionally, transcriptional activator that specifically binds 5'-GATA-3' or 5'-GAT-3' motifs within gene promoters. May be involved in the regulation of some light-responsive genes. The chain is GATA transcription factor 5 (GATA5) from Arabidopsis thaliana (Mouse-ear cress).